Consider the following 371-residue polypeptide: Queuine tRNA-ribosyltransferase (371 aa).

Asp89 (proton acceptor) is an active-site residue. Substrate is bound by residues 89-93, Asp143, Gln185, and Gly212; that span reads DSGGF. Positions 243 to 249 are RNA binding; sequence GVGKPED. Asp262 (nucleophile) is an active-site residue. The segment at 267 to 271 is RNA binding; important for wobble base 34 recognition; the sequence is TRNAR. Positions 300, 302, 305, and 331 each coordinate Zn(2+).

The protein belongs to the queuine tRNA-ribosyltransferase family. Homodimer. Within each dimer, one monomer is responsible for RNA recognition and catalysis, while the other monomer binds to the replacement base PreQ1. Requires Zn(2+) as cofactor.

It carries out the reaction 7-aminomethyl-7-carbaguanine + guanosine(34) in tRNA = 7-aminomethyl-7-carbaguanosine(34) in tRNA + guanine. The protein operates within tRNA modification; tRNA-queuosine biosynthesis. Its function is as follows. Catalyzes the base-exchange of a guanine (G) residue with the queuine precursor 7-aminomethyl-7-deazaguanine (PreQ1) at position 34 (anticodon wobble position) in tRNAs with GU(N) anticodons (tRNA-Asp, -Asn, -His and -Tyr). Catalysis occurs through a double-displacement mechanism. The nucleophile active site attacks the C1' of nucleotide 34 to detach the guanine base from the RNA, forming a covalent enzyme-RNA intermediate. The proton acceptor active site deprotonates the incoming PreQ1, allowing a nucleophilic attack on the C1' of the ribose to form the product. After dissociation, two additional enzymatic reactions on the tRNA convert PreQ1 to queuine (Q), resulting in the hypermodified nucleoside queuosine (7-(((4,5-cis-dihydroxy-2-cyclopenten-1-yl)amino)methyl)-7-deazaguanosine). This Pseudomonas putida (strain ATCC 47054 / DSM 6125 / CFBP 8728 / NCIMB 11950 / KT2440) protein is Queuine tRNA-ribosyltransferase.